The chain runs to 572 residues: MKGKAMTDKDIRHRSKIYDSMVKSPNRAMLRATGMTDKDFETPIVGVISTWAENTPCNIHLHDLGKLAKEGIKAEGAWPVQYGTITVADGIAMGTPGMRFSLTSRDIIADSIEAAMGGHNVDAFVAIGGCDKNMPGSMIAIANMDIPAVFAYGGTIAPGKLDGKDIDLVSVFEGIGKWNHGDLTAEEVRRIECNACPGPGGCGGMYTANTMATAIEVLGMSLPGSSSHPAESKDKQEDIEAAGRAVVKMLKMGLKPSDILTREAFEDAITVTMALGGSTNATLHLLAMAHAANVELTLDDFNVIQEKVPHLADLKPSGQYVFQDLYEVGGVPAVMKYLLANGFLHGDRITCTGKTVAENLVEFADLTPGQKVIMPLENPKRADGPLIILHGNLAPDGAVAKVSGVKVRRHVGPAKVFDSEEAAIDAVLADEVVDGDVVVVRYVGPKGGPGMPEMLSLSSIIVGKGQGDKVALLTDGRFSGGTYGLVVGHIAPEAQDGGPIAYLRTGDMVTVDQDTKEISMAVSDEELAKRKAETTIPPLYSRGVLGKYAHMVSSAAKGAVTDFWKPEETGKK.

Cysteine 57 contributes to the [2Fe-2S] cluster binding site. Aspartate 89 contacts Mg(2+). Cysteine 130 is a [2Fe-2S] cluster binding site. Residues aspartate 131 and lysine 132 each contribute to the Mg(2+) site. Lysine 132 is subject to N6-carboxylysine. Cysteine 202 provides a ligand contact to [2Fe-2S] cluster. Glutamate 453 contacts Mg(2+). Serine 479 (proton acceptor) is an active-site residue.

It belongs to the IlvD/Edd family. In terms of assembly, homodimer. The cofactor is [2Fe-2S] cluster. It depends on Mg(2+) as a cofactor.

The catalysed reaction is (2R)-2,3-dihydroxy-3-methylbutanoate = 3-methyl-2-oxobutanoate + H2O. The enzyme catalyses (2R,3R)-2,3-dihydroxy-3-methylpentanoate = (S)-3-methyl-2-oxopentanoate + H2O. It participates in amino-acid biosynthesis; L-isoleucine biosynthesis; L-isoleucine from 2-oxobutanoate: step 3/4. The protein operates within amino-acid biosynthesis; L-valine biosynthesis; L-valine from pyruvate: step 3/4. Its function is as follows. Functions in the biosynthesis of branched-chain amino acids. Catalyzes the dehydration of (2R,3R)-2,3-dihydroxy-3-methylpentanoate (2,3-dihydroxy-3-methylvalerate) into 2-oxo-3-methylpentanoate (2-oxo-3-methylvalerate) and of (2R)-2,3-dihydroxy-3-methylbutanoate (2,3-dihydroxyisovalerate) into 2-oxo-3-methylbutanoate (2-oxoisovalerate), the penultimate precursor to L-isoleucine and L-valine, respectively. This Streptococcus sanguinis (strain SK36) protein is Dihydroxy-acid dehydratase.